A 342-amino-acid chain; its full sequence is uncharacterized protein (342 aa).

The protein belongs to the cycloisomerase 2 family.

This is an uncharacterized protein from Staphylococcus aureus (strain bovine RF122 / ET3-1).